The sequence spans 266 residues: Methionine aminopeptidase 1 (266 aa).

H88 provides a ligand contact to substrate. A divalent metal cation is bound by residues D106, D117, and H186. H193 is a binding site for substrate. A divalent metal cation-binding residues include E219 and E250.

The protein belongs to the peptidase M24A family. Methionine aminopeptidase type 1 subfamily. In terms of assembly, monomer. Requires Co(2+) as cofactor. It depends on Zn(2+) as a cofactor. Mn(2+) is required as a cofactor. The cofactor is Fe(2+).

It catalyses the reaction Release of N-terminal amino acids, preferentially methionine, from peptides and arylamides.. Its function is as follows. Removes the N-terminal methionine from nascent proteins. The N-terminal methionine is often cleaved when the second residue in the primary sequence is small and uncharged (Met-Ala-, Cys, Gly, Pro, Ser, Thr, or Val). Requires deformylation of the N(alpha)-formylated initiator methionine before it can be hydrolyzed. This is Methionine aminopeptidase 1 from Mycobacterium tuberculosis (strain CDC 1551 / Oshkosh).